The following is a 104-amino-acid chain: Cytochrome c6 (104 aa).

A signal peptide spans 1–20 (MKSLLTFILTTIFCIQQVWA). Positions 34, 37, 38, and 78 each coordinate heme c.

The protein belongs to the cytochrome c family. PetJ subfamily. In terms of assembly, monomer. In terms of processing, binds 1 heme c group covalently per subunit.

It is found in the plastid. It localises to the chloroplast thylakoid lumen. Functions as an electron carrier between membrane-bound cytochrome b6-f and photosystem I in oxygenic photosynthesis. This chain is Cytochrome c6, found in Cyanidioschyzon merolae (strain NIES-3377 / 10D) (Unicellular red alga).